The chain runs to 423 residues: F-box protein At1g52495 (423 aa).

The region spanning 49–95 (KLKDVHLPLDLIVEILKKLPTKSLMRFRCVSKPWSFIISKRRDFVES) is the F-box domain.

This is F-box protein At1g52495 from Arabidopsis thaliana (Mouse-ear cress).